A 256-amino-acid polypeptide reads, in one-letter code: Protein CC2D2B homolog (256 aa).

A disordered region spans residues 1-24 (MSEEMDNVTAEEITDKHLQKDLDA). The segment covering 13 to 22 (ITDKHLQKDL) has biased composition (basic and acidic residues). Coiled-coil stretches lie at residues 136–159 (DLLK…KANI) and 194–214 (EIYK…EEGK).

This is Protein CC2D2B homolog from Macaca fascicularis (Crab-eating macaque).